A 254-amino-acid polypeptide reads, in one-letter code: 3-deoxy-manno-octulosonate cytidylyltransferase (254 aa).

This sequence belongs to the KdsB family.

It localises to the cytoplasm. It catalyses the reaction 3-deoxy-alpha-D-manno-oct-2-ulosonate + CTP = CMP-3-deoxy-beta-D-manno-octulosonate + diphosphate. Its pathway is nucleotide-sugar biosynthesis; CMP-3-deoxy-D-manno-octulosonate biosynthesis; CMP-3-deoxy-D-manno-octulosonate from 3-deoxy-D-manno-octulosonate and CTP: step 1/1. The protein operates within bacterial outer membrane biogenesis; lipopolysaccharide biosynthesis. Functionally, activates KDO (a required 8-carbon sugar) for incorporation into bacterial lipopolysaccharide in Gram-negative bacteria. In Bordetella petrii (strain ATCC BAA-461 / DSM 12804 / CCUG 43448), this protein is 3-deoxy-manno-octulosonate cytidylyltransferase.